Consider the following 96-residue polypeptide: Beta-defensin 132 (96 aa).

Positions 1-22 are cleaved as a signal peptide; sequence MKFLLLVLAALRFLTQVIPASG. Intrachain disulfides connect Cys-27/Cys-55, Cys-35/Cys-49, and Cys-39/Cys-56. A disordered region spans residues 74 to 96; the sequence is HWQSRRRNTQRKDKKQQTTVTSS. Over residues 76-87 the composition is skewed to basic residues; sequence QSRRRNTQRKDK.

Belongs to the beta-defensin family.

The protein localises to the secreted. Functionally, has antibacterial activity. The chain is Beta-defensin 132 (DEFB132) from Hylobates lar (Lar gibbon).